A 256-amino-acid chain; its full sequence is Major prion protein (256 aa).

The first 24 residues, 1 to 24 (MVKSHIGSWILVLFVAMWSDVGLC), serve as a signal peptide directing secretion. Positions 25–41 (KKRPKPGGGWNTGGSRY) are interaction with ADGRG6. Residues 25–233 (KKRPKPGGGW…ESEAYYQRRA (209 aa)) are interaction with GRB2, ERI3 and SYN1. Residues 28–110 (PKPGGGWNTG…QWNKPSKPKT (83 aa)) form a disordered region. Repeat copies occupy residues 54–62 (PQGGGGWGQ), 63–70 (PHGGGWGQ), 71–78 (PHGGGWGQ), 79–86 (PHGGGWGQ), and 87–95 (PHGGGGWGQ). The segment at 54–95 (PQGGGGWGQPHGGGWGQPHGGGWGQPHGGGWGQPHGGGGWGQ) is 5 X 8 AA tandem repeats of P-H-G-G-G-W-G-Q. A compositionally biased stretch (gly residues) spans 55–97 (QGGGGWGQPHGGGWGQPHGGGWGQPHGGGWGQPHGGGGWGQGG). 12 residues coordinate Cu(2+): H64, G65, G66, H72, G73, G74, H80, G81, G82, H88, G90, and G91. C182 and C217 are oxidised to a cystine. N184 and N200 each carry an N-linked (GlcNAc...) asparagine glycan. A lipid anchor (GPI-anchor amidated alanine) is attached at A233. A propeptide spans 234 to 256 (SAILFSSPPVILLISFLIFLIVG) (removed in mature form).

Belongs to the prion family. In terms of assembly, monomer and homodimer. Has a tendency to aggregate into amyloid fibrils containing a cross-beta spine, formed by a steric zipper of superposed beta-strands. Soluble oligomers may represent an intermediate stage on the path to fibril formation. Copper binding may promote oligomerization. Interacts with GRB2, APP, ERI3/PRNPIP and SYN1. Mislocalized cytosolically exposed PrP interacts with MGRN1; this interaction alters MGRN1 subcellular location and causes lysosomal enlargement. Interacts with APP. Interacts with KIAA1191. Interacts with ADGRG6.

It is found in the cell membrane. The protein localises to the golgi apparatus. Its function is as follows. Its primary physiological function is unclear. May play a role in neuronal development and synaptic plasticity. May be required for neuronal myelin sheath maintenance. May promote myelin homeostasis through acting as an agonist for ADGRG6 receptor. May play a role in iron uptake and iron homeostasis. Soluble oligomers are toxic to cultured neuroblastoma cells and induce apoptosis (in vitro). Association with GPC1 (via its heparan sulfate chains) targets PRNP to lipid rafts. Also provides Cu(2+) or Zn(2+) for the ascorbate-mediated GPC1 deaminase degradation of its heparan sulfate side chains. In Felis catus (Cat), this protein is Major prion protein (PRNP).